A 362-amino-acid chain; its full sequence is F-box protein At2g14710 (362 aa).

Residues 1-47 (MAHLKNLPWELIEEILSRVPPKSLVRFRTVSKQWNALFDDKTFINNH) enclose the F-box domain.

In Arabidopsis thaliana (Mouse-ear cress), this protein is F-box protein At2g14710.